A 259-amino-acid polypeptide reads, in one-letter code: Protein GrpE (259 aa).

2 disordered regions span residues 1 to 75 (MNSD…KGSD) and 227 to 259 (GPGP…KDEN). Over residues 20–40 (NNPSENFVSSSNSNESVNQVE) the composition is skewed to low complexity. Basic and acidic residues predominate over residues 46–60 (EVEHQVKNDSVDTAK). The span at 61–73 (EQSSTSCESNIKG) shows a compositional bias: polar residues.

It belongs to the GrpE family. Homodimer.

Its subcellular location is the cytoplasm. In terms of biological role, participates actively in the response to hyperosmotic and heat shock by preventing the aggregation of stress-denatured proteins, in association with DnaK and GrpE. It is the nucleotide exchange factor for DnaK and may function as a thermosensor. Unfolded proteins bind initially to DnaJ; upon interaction with the DnaJ-bound protein, DnaK hydrolyzes its bound ATP, resulting in the formation of a stable complex. GrpE releases ADP from DnaK; ATP binding to DnaK triggers the release of the substrate protein, thus completing the reaction cycle. Several rounds of ATP-dependent interactions between DnaJ, DnaK and GrpE are required for fully efficient folding. This chain is Protein GrpE, found in Prochlorococcus marinus (strain NATL1A).